Here is a 423-residue protein sequence, read N- to C-terminus: Gamma-glutamyl phosphate reductase (423 aa).

This sequence belongs to the gamma-glutamyl phosphate reductase family.

Its subcellular location is the cytoplasm. The catalysed reaction is L-glutamate 5-semialdehyde + phosphate + NADP(+) = L-glutamyl 5-phosphate + NADPH + H(+). It participates in amino-acid biosynthesis; L-proline biosynthesis; L-glutamate 5-semialdehyde from L-glutamate: step 2/2. Its function is as follows. Catalyzes the NADPH-dependent reduction of L-glutamate 5-phosphate into L-glutamate 5-semialdehyde and phosphate. The product spontaneously undergoes cyclization to form 1-pyrroline-5-carboxylate. The polypeptide is Gamma-glutamyl phosphate reductase (Magnetococcus marinus (strain ATCC BAA-1437 / JCM 17883 / MC-1)).